The primary structure comprises 1196 residues: Major DNA-binding protein (1196 aa).

The segment at Cys499–His512 is a zinc-finger region. 2 short sequence motifs (required for filament formation) span residues Phe843–Trp844 and Phe1142–Phe1144. Residues Arg1171–Leu1196 are required for nuclear localization. The segment at His1176–Leu1196 is disordered.

The protein belongs to the herpesviridae major DNA-binding protein family. As to quaternary structure, homooligomers. Forms double-helical filaments necessary for the formation of replication compartments within the host nucleus. Interacts with the origin-binding protein. Interacts with the helicase primase complex; this interaction stimulates primer synthesis activity of the helicase-primase complex. Interacts with the DNA polymerase. Interacts with the alkaline exonuclease; this interaction increases its nuclease processivity.

Its subcellular location is the host nucleus. Plays several crucial roles in viral infection. Participates in the opening of the viral DNA origin to initiate replication by interacting with the origin-binding protein. May disrupt loops, hairpins and other secondary structures present on ssDNA to reduce and eliminate pausing of viral DNA polymerase at specific sites during elongation. Promotes viral DNA recombination by performing strand-transfer, characterized by the ability to transfer a DNA strand from a linear duplex to a complementary single-stranded DNA circle. Can also catalyze the renaturation of complementary single strands. Additionally, reorganizes the host cell nucleus, leading to the formation of prereplicative sites and replication compartments. This process is driven by the protein which can form double-helical filaments in the absence of DNA. This chain is Major DNA-binding protein, found in Human herpesvirus 2 (strain HG52) (HHV-2).